A 273-amino-acid polypeptide reads, in one-letter code: NAD-dependent protein deacylase (273 aa).

One can recognise a Deacetylase sirtuin-type domain in the interval 20-272; the sequence is RERLRQRIFF…PEFVEKLLKG (253 aa). 48–67 serves as a coordination point for NAD(+); it reads GAGISAESGIRTFRAADGLW. Residues tyrosine 92 and arginine 95 each contribute to the substrate site. 129–132 is a binding site for NAD(+); that stretch reads QNID. The active-site Proton acceptor is histidine 147. The Zn(2+) site is built by cysteine 155 and cysteine 174. NAD(+) is bound by residues 214–216, 240–242, and alanine 258; these read GTS and NLE.

This sequence belongs to the sirtuin family. Class III subfamily. Zn(2+) is required as a cofactor.

It localises to the cytoplasm. It carries out the reaction N(6)-acetyl-L-lysyl-[protein] + NAD(+) + H2O = 2''-O-acetyl-ADP-D-ribose + nicotinamide + L-lysyl-[protein]. The enzyme catalyses N(6)-succinyl-L-lysyl-[protein] + NAD(+) + H2O = 2''-O-succinyl-ADP-D-ribose + nicotinamide + L-lysyl-[protein]. It catalyses the reaction N(6)-(2-hydroxyisobutanoyl)-L-lysyl-[protein] + NAD(+) + H2O = 2''-O-(2-hydroxyisobutanoyl)-ADP-D-ribose + nicotinamide + L-lysyl-[protein]. Its function is as follows. NAD-dependent lysine deacetylase that specifically removes acetyl groups on target proteins. Also acts as a protein-lysine deacylase by mediating protein desuccinylation and de-2-hydroxyisobutyrylation. Modulates the activities of several proteins which are inactive in their acylated form. The protein is NAD-dependent protein deacylase of Escherichia coli O6:H1 (strain CFT073 / ATCC 700928 / UPEC).